The primary structure comprises 175 residues: Protein-export protein SecB (175 aa).

A compositionally biased stretch (polar residues) spans 153–163 (QQQPDAANGND). Positions 153–175 (QQQPDAANGNDSGIILPPGATRQ) are disordered.

It belongs to the SecB family. Homotetramer, a dimer of dimers. One homotetramer interacts with 1 SecA dimer.

Its subcellular location is the cytoplasm. One of the proteins required for the normal export of preproteins out of the cell cytoplasm. It is a molecular chaperone that binds to a subset of precursor proteins, maintaining them in a translocation-competent state. It also specifically binds to its receptor SecA. The protein is Protein-export protein SecB of Bordetella bronchiseptica (strain ATCC BAA-588 / NCTC 13252 / RB50) (Alcaligenes bronchisepticus).